A 605-amino-acid polypeptide reads, in one-letter code: Class II receptor tyrosine kinase (605 aa).

One can recognise an Ig-like C2-type domain in the interval 1-67; sequence MWSSPGRNLE…DGESASFRVD (67 aa). The Extracellular segment spans residues 1-84; it reads MWSSPGRNLE…GSNSGVIAGV (84 aa). Asn-26, Asn-44, and Asn-72 each carry an N-linked (GlcNAc...) asparagine glycan. A helical membrane pass occupies residues 85–105; it reads LITLLLLIALIIILICVFWVV. The Cytoplasmic segment spans residues 106-605; sequence WRYRRRGKFD…GRPRGVAGCV (500 aa). The tract at residues 209–230 is disordered; that stretch reads EELSPIQEKPTRRNTGLSTYSQ. Residues 221-230 are compositionally biased toward polar residues; sequence RNTGLSTYSQ. Residues 346 to 605 enclose the Protein kinase domain; sequence IREVKQIGVG…GRPRGVAGCV (260 aa). ATP-binding positions include 352–360 and Lys-393; that span reads IGVGQFGAV. Asp-496 (proton acceptor) is an active-site residue. Tyr-527 carries the post-translational modification Phosphotyrosine; by autocatalysis.

The protein belongs to the protein kinase superfamily. Tyr protein kinase family. Insulin receptor subfamily. Phosphorylated.

Its subcellular location is the cell membrane. It catalyses the reaction L-tyrosyl-[protein] + ATP = O-phospho-L-tyrosyl-[protein] + ADP + H(+). This chain is Class II receptor tyrosine kinase (TK), found in Geodia cydonium (Sponge).